The primary structure comprises 537 residues: [Pyruvate dehydrogenase [acetyl-transferring]]-phosphatase 1, mitochondrial (537 aa).

The transit peptide at Met-1–Tyr-71 directs the protein to the mitochondrion. A PPM-type phosphatase domain is found at Ile-109–Phe-525. Positions 144 and 145 each coordinate Mn(2+). Lys-202 carries the N6-acetyllysine modification. 2 residues coordinate Mn(2+): Asp-418 and Asp-516.

It belongs to the PP2C family. Heterodimer of a catalytic (PDP1) and a regulatory (PDPR) subunit. It depends on Mn(2+) as a cofactor. Mg(2+) serves as cofactor.

The protein resides in the mitochondrion. The catalysed reaction is O-phospho-L-seryl-[pyruvate dehydrogenase E1 alpha subunit] + H2O = L-seryl-[pyruvate dehydrogenase E1 alpha subunit] + phosphate. Magnesium-dependent and calcium-stimulated. PDP1 activity strongly depends on its Ca(2+)-dependent binding to the lipoyl domain of E2 subunit of component of the pyruvate dehydrogenase complex. Its function is as follows. Mitochondrial enzyme that catalyzes the dephosphorylation and concomitant reactivation of the alpha subunit of the E1 component of the pyruvate dehydrogenase complex (PDC), thereby stimulating the conversion of pyruvate into acetyl-CoA. The protein is [Pyruvate dehydrogenase [acetyl-transferring]]-phosphatase 1, mitochondrial (PDP1) of Pongo abelii (Sumatran orangutan).